We begin with the raw amino-acid sequence, 165 residues long: Crossover junction endodeoxyribonuclease RuvC (165 aa).

Active-site residues include Asp-7, Glu-68, and His-142. Mg(2+) is bound by residues Asp-7, Glu-68, and His-142.

Belongs to the RuvC family. In terms of assembly, homodimer which binds Holliday junction (HJ) DNA. The HJ becomes 2-fold symmetrical on binding to RuvC with unstacked arms; it has a different conformation from HJ DNA in complex with RuvA. In the full resolvosome a probable DNA-RuvA(4)-RuvB(12)-RuvC(2) complex forms which resolves the HJ. Mg(2+) serves as cofactor.

It is found in the cytoplasm. It carries out the reaction Endonucleolytic cleavage at a junction such as a reciprocal single-stranded crossover between two homologous DNA duplexes (Holliday junction).. Its function is as follows. The RuvA-RuvB-RuvC complex processes Holliday junction (HJ) DNA during genetic recombination and DNA repair. Endonuclease that resolves HJ intermediates. Cleaves cruciform DNA by making single-stranded nicks across the HJ at symmetrical positions within the homologous arms, yielding a 5'-phosphate and a 3'-hydroxyl group; requires a central core of homology in the junction. The consensus cleavage sequence is 5'-(A/T)TT(C/G)-3'. Cleavage occurs on the 3'-side of the TT dinucleotide at the point of strand exchange. HJ branch migration catalyzed by RuvA-RuvB allows RuvC to scan DNA until it finds its consensus sequence, where it cleaves and resolves the cruciform DNA. The protein is Crossover junction endodeoxyribonuclease RuvC of Anaplasma marginale (strain St. Maries).